The primary structure comprises 231 residues: CLAVATA3/ESR (CLE)-related protein 4B-2 (231 aa).

The signal sequence occupies residues 1–21 (MATNTMLCLLILSVVLALAFA). The tract at residues 21 to 83 (ATNKKGDEEP…SNQLPNNNWM (63 aa)) is required for secretion from the host cytoplasm to the host apoplasm. Asn32 is a glycosylation site (N-linked (GlcNAc...) asparagine). Residues 116 to 231 (RKTGMHSQRH…APAGPDPIHH (116 aa)) form a disordered region. 2 stretches are compositionally biased toward basic and acidic residues: residues 125 to 137 (HHEE…EKRV) and 144 to 221 (PIHH…EKRG). Residues 127-135 (EETTLEQEK) form an A-1 repeat. The interval 127 to 219 (EETTLEQEKR…HEETTFEQEK (93 aa)) is 5 X approximate repeat A. The CLE-1 repeat unit spans residues 136–147 (RVAGAGPDPIHH). A 5 X approximate repeat CLE region spans residues 136-231 (RVAGAGPDPI…APAGPDPIHH (96 aa)). The A-2 repeat unit spans residues 148-156 (EETTLEQEK). The CLE-2 repeat unit spans residues 157–168 (RAVPAGPDPKHH). The stretch at 169–177 (EETTLEQEK) is one A-3 repeat. Residues 178 to 189 (RAVPAGPDPKHH) form a CLE-3 repeat. An A-4 repeat occupies 190-198 (EETTLEQEK). A CLE-4 repeat occupies 199–210 (RAVPAGPDPKHH). One copy of the A-5 repeat lies at 211 to 219 (EETTFEQEK). One copy of the CLE-5 repeat lies at 220–231 (RGAPAGPDPIHH).

The protein belongs to the CLV3/ESR signal peptide family. Highly expressed exclusively within the dorsal esophageal gland cell during syncytium formation in host plants.

The protein localises to the secreted. It localises to the host cytoplasm. Its subcellular location is the host extracellular space. The protein resides in the extracellular space. It is found in the apoplast. In terms of biological role, mimics host plant CLE extracellular signal peptides that regulate cell fate. May play a role in the differentiation or division of feeding cells (syncytia) induced in plant roots during infection. The chain is CLAVATA3/ESR (CLE)-related protein 4B-2 (CLE-4B-2) from Globodera rostochiensis (Golden nematode worm).